The following is a 652-amino-acid chain: Thioredoxin reductase 3 (652 aa).

Positions 1–12 (MEKPPSPPPPPR) are enriched in pro residues. Positions 1 to 62 (MEKPPSPPPP…TSRPSSEARE (62 aa)) are disordered. Position 34 is an asymmetric dimethylarginine; alternate (R34). R34 is subject to Omega-N-methylarginine; alternate. Position 50 is a phosphoserine (S50). One can recognise a Glutaredoxin domain in the interval 65-165 (RRRLRDLIEG…KLLQDDSAHD (101 aa)). Residue 167 to 196 (DLIIIGGGSGGLSCAKEAANLGKKVMVLDF) coordinates FAD. Residues C212 and C217 are joined by a disulfide bond. An N6-succinyllysine modification is found at K388. The Proton acceptor role is filled by H625. Residues 650–651 (CU) constitute a cross-link (cysteinyl-selenocysteine (Cys-Sec)). Position 651 (U651) is a non-standard amino acid, selenocysteine.

Belongs to the class-I pyridine nucleotide-disulfide oxidoreductase family. In terms of assembly, homodimer. Requires FAD as cofactor. In terms of tissue distribution, expressed preferentially in testis where it is found in spermatids and spermatocytes but not in sperm. In elongating spermatids, expressed at the site of mitochondrial sheath formation. Low levels in other tissues including heart, lung, liver, kidney, brain, muscle and prostate.

Its subcellular location is the cytoplasm. The protein localises to the nucleus. It localises to the microsome. It is found in the endoplasmic reticulum. It carries out the reaction [thioredoxin]-dithiol + NADP(+) = [thioredoxin]-disulfide + NADPH + H(+). Displays thioredoxin reductase, glutaredoxin and glutathione reductase activities. Catalyzes disulfide bond isomerization. Promotes disulfide bond formation between GPX4 and various sperm proteins and may play a role in sperm maturation by promoting formation of sperm structural components. The polypeptide is Thioredoxin reductase 3 (Mus musculus (Mouse)).